Consider the following 517-residue polypeptide: Serine hydroxymethyltransferase 2, mitochondrial (517 aa).

A mitochondrion-targeting transit peptide spans 1-31; sequence MAMASALRRLSSSSNKPLQRLFNGGHLYSMS. Lys287 is subject to N6-(pyridoxal phosphate)lysine.

It belongs to the SHMT family. Homotetramer. Pyridoxal 5'-phosphate serves as cofactor.

It localises to the mitochondrion. It carries out the reaction (6R)-5,10-methylene-5,6,7,8-tetrahydrofolate + glycine + H2O = (6S)-5,6,7,8-tetrahydrofolate + L-serine. It participates in one-carbon metabolism; tetrahydrofolate interconversion. Functionally, catalyzes the interconversion of serine and glycine. This is Serine hydroxymethyltransferase 2, mitochondrial from Flaveria pringlei.